Reading from the N-terminus, the 230-residue chain is Thymidylate kinase (230 aa).

20 to 27 (GGEGAGKS) is an ATP binding site.

The protein belongs to the thymidylate kinase family.

It catalyses the reaction dTMP + ATP = dTDP + ADP. Functionally, phosphorylation of dTMP to form dTDP in both de novo and salvage pathways of dTTP synthesis. The protein is Thymidylate kinase of Rhodopseudomonas palustris (strain BisB18).